We begin with the raw amino-acid sequence, 299 residues long: Glutamyl-Q tRNA(Asp) synthetase (299 aa).

Residues 9–13 (RFAPS) and Glu45 each bind L-glutamate. The 'HIGH' region signature appears at 12 to 22 (PSPTGPLHFGS). Positions 101, 103, and 118 each coordinate Zn(2+). The L-glutamate site is built by Tyr170 and Arg188. The 'KMSKS' region signature appears at 226–230 (KLSKS). Position 229 (Lys229) interacts with ATP.

The protein belongs to the class-I aminoacyl-tRNA synthetase family. GluQ subfamily. Zn(2+) serves as cofactor.

Catalyzes the tRNA-independent activation of glutamate in presence of ATP and the subsequent transfer of glutamate onto a tRNA(Asp). Glutamate is transferred on the 2-amino-5-(4,5-dihydroxy-2-cyclopenten-1-yl) moiety of the queuosine in the wobble position of the QUC anticodon. This is Glutamyl-Q tRNA(Asp) synthetase from Xanthomonas axonopodis pv. citri (strain 306).